The chain runs to 528 residues: Apolipoprotein N-acyltransferase (528 aa).

The next 5 helical transmembrane spans lie at 8-28 (IMLLAGWRRALLAIASGAVGA), 69-89 (AFWIGWLFGFGYFVAGLWWLG), 99-119 (FAWALPLAVLGLPAVLAVFYG), 178-198 (VLGLFGVSALAVFVFAAPALL), and 203-223 (GAKLGLALAGILFCGHLGYGA). Residues 241–490 (VQPNIDQAAK…EGVENATFTL (250 aa)) form the CN hydrolase domain. The Proton acceptor role is filled by E285. Residue K349 is part of the active site. The Nucleophile role is filled by C402.

It belongs to the CN hydrolase family. Apolipoprotein N-acyltransferase subfamily.

The protein localises to the cell inner membrane. The enzyme catalyses N-terminal S-1,2-diacyl-sn-glyceryl-L-cysteinyl-[lipoprotein] + a glycerophospholipid = N-acyl-S-1,2-diacyl-sn-glyceryl-L-cysteinyl-[lipoprotein] + a 2-acyl-sn-glycero-3-phospholipid + H(+). The protein operates within protein modification; lipoprotein biosynthesis (N-acyl transfer). In terms of biological role, catalyzes the phospholipid dependent N-acylation of the N-terminal cysteine of apolipoprotein, the last step in lipoprotein maturation. The chain is Apolipoprotein N-acyltransferase from Allorhizobium ampelinum (strain ATCC BAA-846 / DSM 112012 / S4) (Agrobacterium vitis (strain S4)).